Here is a 27-residue protein sequence, read N- to C-terminus: GLRDFNVAVRASNGKYWTRRPESGTLV.

It is found in the secreted. Its subcellular location is the nematocyst. The chain is Cationic protein C1 from Bunodosoma caissarum (Sea anemone).